We begin with the raw amino-acid sequence, 219 residues long: uncharacterized protein (219 aa).

Belongs to the CIA30 family.

Its subcellular location is the cytoplasm. The protein resides in the nucleus. This is an uncharacterized protein from Schizosaccharomyces pombe (strain 972 / ATCC 24843) (Fission yeast).